Reading from the N-terminus, the 586-residue chain is MDDLDALLADLESTTSHISKRPVFLSEEPPYSYPTGNHTYQEIAVPPPVPPPPSSEALNGTVLDPLDQWQPSGSRYAHQQPPSPSPIYSSSTKNSSASNPQDSVGSLCSRAGEEEHVYSFPNKQKSAEPSPTVMSSSLGSNLSELDRLLLELNAVQRSPSGFSAGMVSVQASREPLGSWGTEGRAIILSPFFQDEAESSPPLPGALSPLYGVPESNNLLGGKAGPLMKEKPKRNGGRGLEDVRPSVESLLDELENSVPSPVPAITVNQGEMSSPQRVTSSQQQTRISASSATRELDELMASLSDFKFMAQGKTGSSSPPGGLSKPGSQLDSMLGSLQSDLNKLGVATVAKGVCGACKKPIAGQVVTAMGKTWHPEHFVCTHCQEEIGSRNFFERDGQPYCEKDYHSLFSPRCYYCNGPILDKVVTALDRTWHPEHFFCAQCGAFFGPEGFHEKDGKAYCRKDYFDMFAPKCGGCARAILENYISALNTLWHPECFVCRECFTPFVNGSFFEHDGQPYCEVHYHERRGSLCSGCQKPITGRCITAMAKKFHPEHFVCAFCLKQLNKGTFKEQNDKPYCQSCFLKLFC.

N-acetylmethionine is present on Met-1. The LD motif 1 signature appears at 3-15 (DLDALLADLESTT). The disordered stretch occupies residues 13 to 138 (STTSHISKRP…PSPTVMSSSL (126 aa)). Phosphotyrosine; by PTK6 is present on Tyr-31. Over residues 45 to 54 (VPPPVPPPPS) the composition is skewed to pro residues. Residues Ser-83 and Ser-85 each carry the phosphoserine modification. Over residues 86–98 (PIYSSSTKNSSAS) the composition is skewed to low complexity. Tyr-88 carries the post-translational modification Phosphotyrosine. Phosphoserine is present on Ser-106. A Phosphotyrosine; by PTK6 modification is found at Tyr-118. Ser-119, Ser-126, and Ser-130 each carry phosphoserine. A compositionally biased stretch (polar residues) spans 121 to 137 (PNKQKSAEPSPTVMSSS). Residue Thr-132 is modified to Phosphothreonine. Phosphoserine is present on residues Ser-137, Ser-140, and Ser-143. Residues 144 to 156 (ELDRLLLELNAVQ) carry the LD motif 2 motif. Tyr-210 is subject to Phosphotyrosine. The segment at 220–241 (GGKAGPLMKEKPKRNGGRGLED) is disordered. Residues 245 to 257 (SVESLLDELENSV) carry the LD motif 3 motif. Ser-259 carries the post-translational modification Phosphoserine. Positions 266 to 290 (VNQGEMSSPQRVTSSQQQTRISASS) are disordered. Residue Ser-273 is modified to Phosphoserine; by CDK5. Residues Ser-279, Ser-287, Ser-290, Ser-301, Ser-317, Ser-327, and Ser-335 each carry the phosphoserine modification. Residues 291 to 310 (ATRELDELMASLSDFKFMAQ) are required for binding to PARVA and ILK. An LD motif 4 motif is present at residues 294–305 (ELDELMASLSDF). The segment at 309 to 329 (AQGKTGSSSPPGGLSKPGSQL) is disordered. Residues 310–329 (QGKTGSSSPPGGLSKPGSQL) are compositionally biased toward low complexity. The short motif at 328-340 (QLDSMLGSLQSDL) is the LD motif 5 element. LIM zinc-binding domains are found at residues 353–403 (CGAC…CEKD), 412–462 (CYYC…CRKD), and 471–521 (CGGC…CEVH). Ser-528 is modified (phosphoserine). An LIM zinc-binding 4 domain is found at 530–580 (CSGCQKPITGRCITAMAKKFHPEHFVCAFCLKQLNKGTFKEQNDKPYCQSC).

The protein belongs to the paxillin family. In terms of assembly, interacts in vitro with VCL/vinculin as well as to the SH3 domain of SRC and, when tyrosine phosphorylated, to the SH2 domain of CRK. Interacts with GIT1. Interacts with NUDT16L1/SDOS. Interacts with PTK2/FAK1. Interacts with PTK2B/PYK2. Interacts with ASAP2. Interacts with unphosphorylated ITGA4. Interacts with RNF5. Interacts with PDCD10. Interacts with NEK3, the interaction is prolactin-dependent. Interacts with PTK6. Interacts with TGFB1I1. Interacts with SORBS1. Interacts with PARVB. Interacts (via LD motif 4) with PARVA/PARVIN. Interacts (via LD motif 4) with ILK. Interacts (via cytoplasmic domain) with CEACAM1; the interaction is phosphotyrosyl-dependent. Interacts with LIMA1; this complex stabilizes actin dynamics. Interacts with CD36 (via C-terminus). Interacts with TRIM15. Interacts with PAK4; PAK4 acts as a scaffold to suppport PAXI phosphorylation at Ser-301. Post-translationally, phosphorylated by MAPK1/ERK2. Phosphorylated on tyrosine residues during integrin-mediated cell adhesion, embryonic development, fibroblast transformation and following stimulation of cells by mitogens. Phosphorylation at Ser-273 by CDK5 reduces its interaction with PTK2/FAK1 in matrix-cell focal adhesions (MCFA) during oligodendrocytes (OLs) differentiation. Phosphorylation at Tyr-31 and Tyr-118 by PTK6 promote the activation of RAC1 via CRK/CrKII, thereby promoting migration and invasion. Phosphorylation at Ser-279 by SLK is required for PXN redistribution and cell motility. Phosphorylation at Ser-301 promotes focal adhesion disassembly during cell migration.

It localises to the cytoplasm. It is found in the cytoskeleton. The protein localises to the cell junction. Its subcellular location is the focal adhesion. The protein resides in the cell cortex. Cytoskeletal protein involved in actin-membrane attachment at sites of cell adhesion to the extracellular matrix (focal adhesion). Recruits other proteins such as TRIM15 to focal adhesion. The polypeptide is Paxillin (Rattus norvegicus (Rat)).